We begin with the raw amino-acid sequence, 122 residues long: Large ribosomal subunit protein bL12 (122 aa).

Belongs to the bacterial ribosomal protein bL12 family. As to quaternary structure, homodimer. Part of the ribosomal stalk of the 50S ribosomal subunit. Forms a multimeric L10(L12)X complex, where L10 forms an elongated spine to which 2 to 4 L12 dimers bind in a sequential fashion. Binds GTP-bound translation factors.

Its function is as follows. Forms part of the ribosomal stalk which helps the ribosome interact with GTP-bound translation factors. Is thus essential for accurate translation. This chain is Large ribosomal subunit protein bL12, found in Fusobacterium nucleatum subsp. nucleatum (strain ATCC 25586 / DSM 15643 / BCRC 10681 / CIP 101130 / JCM 8532 / KCTC 2640 / LMG 13131 / VPI 4355).